The sequence spans 510 residues: Cytochrome P450 monooxygenase penQ (510 aa).

Residues 9–26 traverse the membrane as a helical segment; the sequence is WIVTLIVAATTYCTLRWV. Residues asparagine 148 and asparagine 341 are each glycosylated (N-linked (GlcNAc...) asparagine). Cysteine 448 provides a ligand contact to heme. Asparagine 482 is a glycosylation site (N-linked (GlcNAc...) asparagine).

It belongs to the cytochrome P450 family. Heme serves as cofactor.

It localises to the membrane. It participates in secondary metabolite biosynthesis. In terms of biological role, cytochrome P450 monooxygenase; part of the gene cluster that mediates the biosynthesis of the indole diterpenes penitrems. The geranylgeranyl diphosphate (GGPP) synthase penG catalyzes the first step in penitrem biosynthesis via conversion of farnesyl pyrophosphate and isopentyl pyrophosphate into geranylgeranyl pyrophosphate (GGPP). Condensation of indole-3-glycerol phosphate with GGPP by the prenyl transferase penC then forms 3-geranylgeranylindole (3-GGI). Epoxidation by the FAD-dependent monooxygenase penM leads to a epoxidized-GGI that is substrate of the terpene cyclase penB for cyclization to yield paspaline. Paspaline is subsequently converted to 13-desoxypaxilline by the cytochrome P450 monooxygenase penP, the latter being then converted to paxilline by the cytochrome P450 monooxygenase penQ. Paxilline is converted to beta-paxitriol via C-10 ketoreduction by the short-chain dehydrogenase PC-15 which can be monoprenylated at the C-20 by the indole diterpene prenyltransferase penD. A two-step elimination (acetylation and elimination) process performed by the O-acetyltransferase PC-16 and the P.simplicissimum ptmI-ortholog not yet identified in P.crustosum, leads to the production of the prenylated form of penijanthine. The FAD-linked oxidoreductase ptmO then converts the prenylated form of penijanthine into PC-M5 which is in turn transformed into PC-M4 by the aromatic dimethylallyltransferase PC-22. A series of oxidation steps involving 4 cytochrome P450 monooxygenases (PC-21, PC-05, PC-23, PC-20) and a FAD-dependent monooxygenase (PC-14) are required for the transformation of PC-M4 to penitrems A and E. Synthesis of these final products is proposed to proceed via penitrems D and C (PC-21, PC-05, PC-14) and penitrems B and F (PC-21, PC-05, PC-14, PC-23). The sequence is that of Cytochrome P450 monooxygenase penQ from Penicillium crustosum (Blue mold fungus).